A 400-amino-acid chain; its full sequence is Clotting factor B (400 aa).

Residues 1–23 (MTWICVITLFALASATLGNKVSR) form the signal peptide. The Clip domain maps to 36-80 (ECTARGGLKGSCKSLIDCPSVLATLKDSFPVVCSWNGRFQPIVCC). Cystine bridges form between Cys37–Cys79, Cys47–Cys68, and Cys53–Cys80. Residues 104–124 (LPRLHISGCGKRKVKIDITTV) constitute a propeptide, activation peptide. Asn140 is a glycosylation site (N-linked (GlcNAc...) asparagine). One can recognise a Peptidase S1 domain in the interval 148–392 (IAGGVEAKIG…YLDWIAKVTN (245 aa)). Active-site charge relay system residues include His192 and Asp240. N-linked (GlcNAc...) asparagine glycosylation is present at Asn251. 2 cysteine pairs are disulfide-bonded: Cys307–Cys329 and Cys340–Cys368. Catalysis depends on Ser344, which acts as the Charge relay system. N-linked (GlcNAc...) asparagine glycosylation occurs at Asn352.

It belongs to the peptidase S1 family. CLIP subfamily. Upon activation by factor C, it is converted to a two-chain active form composed of a light and a heavy chain linked by a disulfide bond.

It is found in the secreted. It catalyses the reaction Selective cleavage of 98-Arg-|-Ile-99 bond in Limulus proclotting enzyme to form active clotting enzyme.. With respect to regulation, strongly inhibited by alpha2-plasmin inhibitor and DFP. Partially inhibited by benzamidine, leupeptin and PCMB. In terms of biological role, this enzyme is closely associated with an endotoxin-sensitive hemolymph coagulation system which may play important roles in both hemostasis and host defense mechanisms. Its active form catalyzes the activation of proclotting enzyme. Does not activate the mammalian coagulation factors factor IX, factor X, prothrombin, plasminogen, protein C or prekallikrein. Does not hydrolyze fibrinogen. Does not catalyze the activation of factor C or coagulogen. The sequence is that of Clotting factor B from Tachypleus tridentatus (Japanese horseshoe crab).